Reading from the N-terminus, the 475-residue chain is Ribulose bisphosphate carboxylase large chain (475 aa).

A propeptide spanning residues 1–2 is cleaved from the precursor; sequence MS. Residue proline 3 is modified to N-acetylproline. Position 14 is an N6,N6,N6-trimethyllysine (lysine 14). Residues asparagine 123 and threonine 173 each coordinate substrate. Lysine 175 acts as the Proton acceptor in catalysis. A substrate-binding site is contributed by lysine 177. Lysine 201, aspartate 203, and glutamate 204 together coordinate Mg(2+). Lysine 201 is modified (N6-carboxylysine). The active-site Proton acceptor is histidine 294. Substrate contacts are provided by arginine 295, histidine 327, and serine 379.

Belongs to the RuBisCO large chain family. Type I subfamily. In terms of assembly, heterohexadecamer of 8 large chains and 8 small chains; disulfide-linked. The disulfide link is formed within the large subunit homodimers. It depends on Mg(2+) as a cofactor. In terms of processing, the disulfide bond which can form in the large chain dimeric partners within the hexadecamer appears to be associated with oxidative stress and protein turnover.

It is found in the plastid. The protein localises to the chloroplast. The catalysed reaction is 2 (2R)-3-phosphoglycerate + 2 H(+) = D-ribulose 1,5-bisphosphate + CO2 + H2O. It catalyses the reaction D-ribulose 1,5-bisphosphate + O2 = 2-phosphoglycolate + (2R)-3-phosphoglycerate + 2 H(+). RuBisCO catalyzes two reactions: the carboxylation of D-ribulose 1,5-bisphosphate, the primary event in carbon dioxide fixation, as well as the oxidative fragmentation of the pentose substrate in the photorespiration process. Both reactions occur simultaneously and in competition at the same active site. In Cucumis sativus (Cucumber), this protein is Ribulose bisphosphate carboxylase large chain (rbcL).